The chain runs to 237 residues: tRNA1(Val) (adenine(37)-N6)-methyltransferase (237 aa).

Belongs to the methyltransferase superfamily. tRNA (adenine-N(6)-)-methyltransferase family.

Its subcellular location is the cytoplasm. The catalysed reaction is adenosine(37) in tRNA1(Val) + S-adenosyl-L-methionine = N(6)-methyladenosine(37) in tRNA1(Val) + S-adenosyl-L-homocysteine + H(+). Its function is as follows. Specifically methylates the adenine in position 37 of tRNA(1)(Val) (anticodon cmo5UAC). The chain is tRNA1(Val) (adenine(37)-N6)-methyltransferase from Pasteurella multocida (strain Pm70).